Consider the following 168-residue polypeptide: MSNPMRPVRSILLAIFTGCAGLIGYALYLQLVENLLPCPLCVVQRMAYWLIGLTALAGFFHTPETTGRRIYAGLMAVFAFTGGLVALRQAWLVRYPEAFECGISPEEAFLNALPLARWWPVMFEANGDCADVTWKFASLTLPDWSAIFFMILAALSIYVLLVRENQRE.

Residues 1 to 11 are Cytoplasmic-facing; it reads MSNPMRPVRSI. A helical membrane pass occupies residues 12-28; sequence LLAIFTGCAGLIGYALY. At 29–46 the chain is on the periplasmic side; it reads LQLVENLLPCPLCVVQRM. Cys38 and Cys41 are oxidised to a cystine. Residues 47–63 traverse the membrane as a helical segment; sequence AYWLIGLTALAGFFHTP. The Cytoplasmic portion of the chain corresponds to 64–69; that stretch reads ETTGRR. Residues 70–87 form a helical membrane-spanning segment; that stretch reads IYAGLMAVFAFTGGLVAL. Over 88 to 143 the chain is Periplasmic; the sequence is RQAWLVRYPEAFECGISPEEAFLNALPLARWWPVMFEANGDCADVTWKFASLTLPD. An intrachain disulfide couples Cys101 to Cys129. Residues 144–162 traverse the membrane as a helical segment; it reads WSAIFFMILAALSIYVLLV. The Cytoplasmic segment spans residues 163–168; sequence RENQRE.

This sequence belongs to the DsbB family.

It localises to the cell inner membrane. In terms of biological role, required for disulfide bond formation in some periplasmic proteins. Acts by oxidizing the DsbA protein. The chain is Disulfide bond formation protein B from Nitrosospira multiformis (strain ATCC 25196 / NCIMB 11849 / C 71).